Here is a 2542-residue protein sequence, read N- to C-terminus: Unconventional myosin-IXa (2542 aa).

The 99-residue stretch at 14–112 (NEHTLRIYPG…YRFLLREKNL (99 aa)) folds into the Ras-associating domain. In terms of domain architecture, Myosin motor spans 146–1017 (KDFDDLCSLP…ERQHLQDLLH (872 aa)). Residues 175–195 (IYTYVGSILIAINPFKFLPIY) traverse the membrane as a helical segment. 239–246 (GESGSGKT) provides a ligand contact to ATP. Serine 755 is subject to Phosphoserine. The actin-binding stretch occupies residues 908–919 (QAEPYFVKCIRS). 5 consecutive IQ domains span residues 1021 to 1041 (LRRIVLLQRWFRVLLSRQQFL), 1043 to 1072 (LRQASIIIQRFWRNYLNQKQVRNAAVEKDA), 1075 to 1104 (MASAASLLQASWRAHLERQRYLELRAAAVI), 1116 to 1145 (RHKAATCIQSRWRGYRQRKKYKEQRNKIIL), and 1139 to 1168 (QRNKIILLQSIYRGFRARQRCNALKEEKLR). Residues 1022-1163 (RRIVLLQRWF…RARQRCNALK (142 aa)) are neck or regulatory domain. The segment at 1164–2505 (EEKLREAKLE…LKNVKNSPQK (1342 aa)) is tail. Positions 1221–1240 (RESSMDFSKESPDKQQERGR) are enriched in basic and acidic residues. Positions 1221-1276 (RESSMDFSKESPDKQQERGRRQSGTDLQEDVIVRQRPKSLEDLHQKKVGRAKRESR) are disordered. Serine 1243 carries the phosphoserine modification. Phosphothreonine is present on threonine 1245. Serine 1259 is subject to Phosphoserine. The stretch at 1265–1292 (QKKVGRAKRESRRMRELEQAIFSLELLK) forms a coiled coil. Over residues 1266–1276 (KKVGRAKRESR) the composition is skewed to basic residues. Phosphoserine is present on residues serine 1300 and serine 1318. The segment at 1342-1401 (KSKPESLILDEGELKISSPNTFTNPKSQDNALSASSETSSTLAGKGASSDSEHLKNGTAK) is disordered. The segment covering 1358 to 1371 (SSPNTFTNPKSQDN) has biased composition (polar residues). Residues 1372–1384 (ALSASSETSSTLA) are compositionally biased toward low complexity. Basic and acidic residues predominate over residues 1391–1401 (DSEHLKNGTAK). Residues 1492 to 1539 (TVLKKLEKLNIEKEKRQKQLQQQNEKEMMEQIRQQTDILEKERKAFKT) are a coiled coil. Disordered regions lie at residues 1650–1675 (RSTERDHFKSTHFYSHRSDDPSREGS), 1693–1727 (SGNPQAHKQDESAWKPKLAGPGQQETSQRFSSVDE), 1767–1793 (GKQGEKKTTRVKPASQSEISSFFPGPD), and 1806–1841 (QYHPTPPLSPELPGSCRKEFKENKEPSPKAKRKRGV). Residues 1665–1675 (HRSDDPSREGS) show a composition bias toward basic and acidic residues. The segment covering 1715–1726 (QQETSQRFSSVD) has biased composition (polar residues). The span at 1821-1833 (CRKEFKENKEPSP) shows a compositional bias: basic and acidic residues. Serine 1950 carries the post-translational modification Phosphoserine. Phorbol-ester/DAG-type zinc fingers lie at residues 2001-2050 (GHIF…TAKC) and 2068-2119 (SRLT…DTDA). One can recognise a Rho-GAP domain in the interval 2065–2253 (VELSRLTSED…LIVVEQMNKY (189 aa)). A phosphoserine mark is found at serine 2293 and serine 2296. Residues 2324–2360 (TDQQQAAMQQEEKVLTEQIENLQKEKEELTFEMLVLE) are a coiled coil. The segment at 2361-2443 (PRASDDETLE…NTTSSHGTRK (83 aa)) is disordered. The segment covering 2377-2386 (TADSSENLNM) has biased composition (polar residues). The segment covering 2420-2438 (SLDSVSSSVSSCLSNTTSS) has biased composition (low complexity). A Phosphoserine modification is found at serine 2458. Positions 2465–2530 (TEGPLGQAKS…TVDSDCSSTQ (66 aa)) are disordered.

Belongs to the TRAFAC class myosin-kinesin ATPase superfamily. Myosin family. Phosphorylated by ALPK1 following monosodium urate monohydrate (MSU)-induced inflammation. As to expression, expressed in the eye, lung, liver, brain, heart, kidney, skeletal muscle and spleen. No detection was found in liver. In the brain, expressed in the ependymal cells of the third ventricle and the aqueduct.

The protein localises to the membrane. It localises to the cytoplasm. It is found in the synapse. Its subcellular location is the cell projection. The protein resides in the growth cone. Myosins are actin-based motor molecules with ATPase activity. Unconventional myosins serve in intracellular movements. Regulates Rho by stimulating it's GTPase activity in neurons. Required for the regulation of neurite branching and motor neuron axon guidance. The sequence is that of Unconventional myosin-IXa (Myo9a) from Mus musculus (Mouse).